A 234-amino-acid polypeptide reads, in one-letter code: Demethylmenaquinone methyltransferase (234 aa).

S-adenosyl-L-methionine-binding positions include Thr-58, Asp-79, and 104-105 (NA).

The protein belongs to the class I-like SAM-binding methyltransferase superfamily. MenG/UbiE family.

It carries out the reaction a 2-demethylmenaquinol + S-adenosyl-L-methionine = a menaquinol + S-adenosyl-L-homocysteine + H(+). The protein operates within quinol/quinone metabolism; menaquinone biosynthesis; menaquinol from 1,4-dihydroxy-2-naphthoate: step 2/2. In terms of biological role, methyltransferase required for the conversion of demethylmenaquinol (DMKH2) to menaquinol (MKH2). In Lysinibacillus sphaericus (strain C3-41), this protein is Demethylmenaquinone methyltransferase.